A 204-amino-acid polypeptide reads, in one-letter code: MTKLLQIIASPRGGDSKSNALADAFVAAQRAKDSTLQVDHLDLWAEDLPAFDGDPAAAKMTFFGVGQMDPSKEQAWSAVARITERFMSADHVVMGVPMWNGGIPYRLKHYIDIITQPGMLFGFDPDNGYSGLLRNRKATVVTTSGVWSEGADARFGSDFHSTYLKWWFETIGITDVTFVRYQPSLLTDDPQAGYDRALAALTAA.

FMN is bound by residues serine 10 and 16 to 18 (SKS).

It belongs to the azoreductase type 1 family. In terms of assembly, homodimer. The cofactor is FMN.

It carries out the reaction 2 a quinone + NADH + H(+) = 2 a 1,4-benzosemiquinone + NAD(+). The catalysed reaction is N,N-dimethyl-1,4-phenylenediamine + anthranilate + 2 NAD(+) = 2-(4-dimethylaminophenyl)diazenylbenzoate + 2 NADH + 2 H(+). Functionally, quinone reductase that provides resistance to thiol-specific stress caused by electrophilic quinones. Also exhibits azoreductase activity. Catalyzes the reductive cleavage of the azo bond in aromatic azo compounds to the corresponding amines. The chain is FMN-dependent NADH:quinone oxidoreductase from Ruegeria pomeroyi (strain ATCC 700808 / DSM 15171 / DSS-3) (Silicibacter pomeroyi).